A 486-amino-acid polypeptide reads, in one-letter code: Glutamate--tRNA ligase 1 (486 aa).

The 'HIGH' region signature appears at 9–19 (PSPTGMLHIGG). A 'KMSKS' region motif is present at residues 259-263 (KLSKR). Lysine 262 is an ATP binding site.

It belongs to the class-I aminoacyl-tRNA synthetase family. Glutamate--tRNA ligase type 1 subfamily. As to quaternary structure, monomer.

It localises to the cytoplasm. It catalyses the reaction tRNA(Glu) + L-glutamate + ATP = L-glutamyl-tRNA(Glu) + AMP + diphosphate. In terms of biological role, catalyzes the attachment of glutamate to tRNA(Glu) in a two-step reaction: glutamate is first activated by ATP to form Glu-AMP and then transferred to the acceptor end of tRNA(Glu). The protein is Glutamate--tRNA ligase 1 of Hyphomonas neptunium (strain ATCC 15444).